The sequence spans 684 residues: 77 kDa membrane protein (684 aa).

The signal sequence occupies residues 1–30 (MKFKSLITTTLALGVLASTGANFNNNEASA). MAP repeat units follow at residues 45–154 (GYSK…EDKK), 156–265 (DKAN…ENKA), 266–374 (KRNY…KADR), 375–474 (YVPY…TGTK), 475–584 (AKAD…KKNN), and 586–684 (SNNV…ELKF).

It is found in the cell membrane. Binds various plasma and ECM-proteins. The protein is 77 kDa membrane protein of Staphylococcus aureus (strain COL).